We begin with the raw amino-acid sequence, 1233 residues long: DNA-directed RNA polymerase subunit beta' (1233 aa).

Zn(2+) is bound by residues C61, C63, C76, and C79. Residues D455, D457, and D459 each coordinate Mg(2+). 4 residues coordinate Zn(2+): C824, C898, C905, and C908. Basic and acidic residues predominate over residues E1211 to P1220. Positions E1211 to K1233 are disordered. The span at A1221–K1233 shows a compositional bias: polar residues.

This sequence belongs to the RNA polymerase beta' chain family. In terms of assembly, the RNAP catalytic core consists of 2 alpha, 1 beta, 1 beta' and 1 omega subunit. When a sigma factor is associated with the core the holoenzyme is formed, which can initiate transcription. Requires Mg(2+) as cofactor. It depends on Zn(2+) as a cofactor.

It carries out the reaction RNA(n) + a ribonucleoside 5'-triphosphate = RNA(n+1) + diphosphate. Its function is as follows. DNA-dependent RNA polymerase catalyzes the transcription of DNA into RNA using the four ribonucleoside triphosphates as substrates. This is DNA-directed RNA polymerase subunit beta' from Oenococcus oeni (strain ATCC BAA-331 / PSU-1).